Consider the following 297-residue polypeptide: Probable endonuclease 4 (297 aa).

Zn(2+) is bound by residues His-69, His-110, Glu-145, Asp-179, His-182, His-214, Asp-227, His-229, and Glu-259.

This sequence belongs to the AP endonuclease 2 family. Zn(2+) serves as cofactor.

It carries out the reaction Endonucleolytic cleavage to 5'-phosphooligonucleotide end-products.. Its function is as follows. Endonuclease IV plays a role in DNA repair. It cleaves phosphodiester bonds at apurinic or apyrimidinic (AP) sites, generating a 3'-hydroxyl group and a 5'-terminal sugar phosphate. The chain is Probable endonuclease 4 from Bacillus velezensis (strain DSM 23117 / BGSC 10A6 / LMG 26770 / FZB42) (Bacillus amyloliquefaciens subsp. plantarum).